The following is a 405-amino-acid chain: Putative polysaccharide ligase RT0347 (405 aa).

The next 10 membrane-spanning stretches (helical) occupy residues 23–43 (IAATVLFFLLIIVITELISFI), 77–97 (LFIAWCFISCLFTIHPINSLV), 120–140 (ILYLKNSLILGIITAILLFFI), 156–178 (FGLYMLDRGCALLSITTWVVIII), 201–221 (ISDSLASFVGFSIGGIIFILA), 227–247 (IFFKLITISLITGSLLFPIIA), 270–290 (LFIWHFVANKIIIKPILGYGF), 322–342 (ILQITLELGILGLALFLCLVY), 353–375 (ISNFRAASYSCFINYYIIGMISY), and 377–397 (IWQTWWILSGIWILVLMKLLV).

It belongs to the O-antigen ligase family.

The protein resides in the membrane. The chain is Putative polysaccharide ligase RT0347 from Rickettsia typhi (strain ATCC VR-144 / Wilmington).